The primary structure comprises 403 residues: Microtubule-associated protein tau (403 aa).

The span at 1–32 (MAEPRQEFDVMEDHAQGDYTLQDHEGDMEPGL) shows a compositional bias: basic and acidic residues. A disordered region spans residues 1–219 (MAEPRQEFDV…GPMPDLKNVK (219 aa)). Ala-2 carries the post-translational modification N-acetylalanine. Tyr-19 carries the post-translational modification Phosphotyrosine. Lys-33 is covalently cross-linked (Glycyl lysine isopeptide (Lys-Gly) (interchain with G-Cter in ubiquitin)). Residues Ser-35 and Ser-50 each carry the phosphoserine modification. A compositionally biased stretch (polar residues) spans 50-60 (SETSDAKSTPT). Phosphothreonine is present on residues Thr-58, Thr-60, and Thr-71. The segment covering 90–106 (KGKDGTGPDDKKAKGAD) has biased composition (basic and acidic residues). Thr-115 is modified (phosphothreonine). Omega-N-methylarginine is present on Arg-117. The residue at position 125 (Lys-125) is an N6,N6-dimethyllysine; alternate. The residue at position 125 (Lys-125) is an N6-acetyllysine; alternate. Residues Thr-131, Thr-137, Thr-138, and Thr-143 each carry the phosphothreonine modification. A compositionally biased stretch (low complexity) spans 136-147 (KTTPTPKTSPGT). 2 positions are modified to phosphoserine: Ser-153 and Ser-157. Over residues 156–176 (RSGYSSPGSPGTPGSRSRTPS) the composition is skewed to low complexity. The residue at position 159 (Tyr-159) is a Phosphotyrosine. Residues Ser-160, Ser-161, and Ser-164 each carry the phosphoserine modification. A phosphothreonine mark is found at Thr-167 and Thr-174. At Ser-176 the chain carries Phosphoserine. At Thr-179 the chain carries Phosphothreonine. Lys-187 carries the N6-acetyllysine modification. Thr-193 is modified (phosphothreonine). 2 positions are modified to phosphoserine: Ser-197 and Ser-199. Tau/MAP repeat units follow at residues 206–236 (QAAPGPMPDLKNVKSKIGSTENLKHQPGGGK), 237–267 (VQIINKKLDLSNVQSKCGSKDNIKHVPGGGS), 268–298 (VQIVYKPVDLSKVTSKCGSLGNIHHKPGGGQ), and 299–330 (VEVKSEKLDFKDRVQSKIGSLDNITHVPGGGN). Lys-216 is covalently cross-linked (Glycyl lysine isopeptide (Lys-Gly) (interchain with G-Cter in ubiquitin)). Lys-221 carries the N6-acetyllysine; alternate modification. Lys-221 is subject to N6-methyllysine; alternate. Lys-221 participates in a covalent cross-link: Glycyl lysine isopeptide (Lys-Gly) (interchain with G-Cter in ubiquitin); alternate. Phosphoserine is present on Ser-224. A Glycyl lysine isopeptide (Lys-Gly) (interchain with G-Cter in ubiquitin) cross-link involves residue Lys-229. N6-acetyllysine; alternate is present on Lys-243. Lys-243 is covalently cross-linked (Glycyl lysine isopeptide (Lys-Gly) (interchain with G-Cter in ubiquitin); alternate). Phosphoserine is present on residues Ser-247 and Ser-251. Lys-252 is modified (N6-acetyllysine). Cys-253 and Cys-284 are oxidised to a cystine. A Phosphoserine modification is found at Ser-255. At Lys-260 the chain carries N6-acetyllysine; alternate. Residue Lys-260 forms a Glycyl lysine isopeptide (Lys-Gly) (interchain with G-Cter in ubiquitin); alternate linkage. Position 267 is a phosphoserine (Ser-267). Lys-273 is subject to N6,N6-dimethyllysine; alternate. Residues Lys-273, Lys-279, and Lys-283 each carry the N6-acetyllysine; alternate modification. Residues Lys-273, Lys-279, and Lys-283 each participate in a glycyl lysine isopeptide (Lys-Gly) (interchain with G-Cter in ubiquitin); alternate cross-link. A Phosphoserine modification is found at Ser-286. 3 positions are modified to N6-acetyllysine; alternate: Lys-293, Lys-305, and Lys-309. Residues Lys-293, Lys-305, and Lys-309 each participate in a glycyl lysine isopeptide (Lys-Gly) (interchain with G-Cter in ubiquitin); alternate cross-link. Arg-311 carries the post-translational modification Omega-N-methylarginine. Ser-314 is subject to Phosphoserine. Lys-315 is covalently cross-linked (Glycyl lysine isopeptide (Lys-Gly) (interchain with G-Cter in ubiquitin)). Residue Ser-318 is modified to Phosphoserine. The residue at position 331 (Lys-331) is an N6-acetyllysine; alternate. A Glycyl lysine isopeptide (Lys-Gly) (interchain with G-Cter in ubiquitin); alternate cross-link involves residue Lys-331. Lys-337 participates in a covalent cross-link: Glycyl lysine isopeptide (Lys-Gly) (interchain with G-Cter in ubiquitin). N6-acetyllysine; alternate is present on Lys-347. A Glycyl lysine isopeptide (Lys-Gly) (interchain with G-Cter in ubiquitin); alternate cross-link involves residue Lys-347. Phosphotyrosine is present on Tyr-356. Ser-358 and Ser-362 each carry phosphoserine. Residues 360–379 (VVSGDTSPRHLSNVSSTGSI) are disordered. Positions 363–378 (GDTSPRHLSNVSSTGS) are enriched in polar residues. Thr-365 is subject to Phosphothreonine. Phosphoserine is present on residues Ser-366, Ser-371, Ser-378, and Ser-384. Phosphothreonine is present on Thr-389.

As to quaternary structure, interacts with MARK1, MARK2, MARK3 and MARK4. Interacts with SQSTM1 when polyubiquitinated. Interacts with PSMC2 through SQSTM1. Interacts with FKBP4. Binds to CSNK1D. Interacts with SGK1. Interacts with PIN1. Interacts with LRRK2. Interacts with LRP1, leading to endocytosis; this interaction is reduced in the presence of LRPAP1/RAP. Post-translationally, polyubiquitinated. Requires functional TRAF6 and may provoke SQSTM1-dependent degradation by the proteasome. In terms of processing, phosphorylation at various serine and threonine residues in S-P or T-P motifs by proline-directed protein kinases (PDPK1, CDK1, CDK5, GSK3, MAPK) (a few sites per protein in interphase, more in mitosis), and at serine residues in K-X-G-S motifs by MAP/microtubule affinity-regulating kinase (MARK1, MARK2, MARK3, MARK4), causing detachment from microtubules, and their disassembly. Phosphorylation at Ser-224 by BRSK1 and BRSK2 in neurons affects ability to bind microtubules and plays a role in neuron polarization. Phosphorylated by PHK. Dephosphorylation at several serine and threonine residues by the serine/threonine phosphatase PPP5C. In terms of tissue distribution, expressed in neurons.

It localises to the cytoplasm. The protein localises to the cytosol. It is found in the cell membrane. Its subcellular location is the cytoskeleton. The protein resides in the cell projection. It localises to the axon. The protein localises to the dendrite. Its function is as follows. Promotes microtubule assembly and stability, and might be involved in the establishment and maintenance of neuronal polarity. The C-terminus binds axonal microtubules while the N-terminus binds neural plasma membrane components, suggesting that tau functions as a linker protein between both. Axonal polarity is predetermined by tau localization (in the neuronal cell) in the domain of the cell body defined by the centrosome. The short isoforms allow plasticity of the cytoskeleton whereas the longer isoforms may preferentially play a role in its stabilization. The sequence is that of Microtubule-associated protein tau (MAPT) from Capra hircus (Goat).